Here is a 112-residue protein sequence, read N- to C-terminus: Nitrogen regulatory protein P-II (112 aa).

Tyr-51 is subject to O-UMP-tyrosine.

Belongs to the P(II) protein family. As to quaternary structure, homotrimer.

In nitrogen-limiting conditions, when the ratio of Gln to 2-ketoglutarate decreases, P-II is uridylylated to P-II-UMP. P-II-UMP allows the deadenylation of glutamine synthetase (GS), thus activating the enzyme. Conversely, in nitrogen excess P-II is deuridylated and promotes the adenylation of GS. P-II indirectly controls the transcription of the GS gene (glnA). P-II prevents NR-II-catalyzed conversion of NR-I to NR-I-phosphate, the transcriptional activator of glnA. When P-II is uridylylated to P-II-UMP, these events are reversed. This Azospirillum brasilense protein is Nitrogen regulatory protein P-II (glnB).